Here is a 342-residue protein sequence, read N- to C-terminus: Foldase protein PrsA (342 aa).

The N-terminal stretch at 1–22 (MVSVKKIVASALVGVLMFSAVG) is a signal peptide. Cys-23 carries the N-palmitoyl cysteine lipid modification. Cys-23 is lipidated: S-diacylglycerol cysteine. Positions 190–284 (AKGVLARHLL…FGYHIIQAGA (95 aa)) constitute a PpiC domain.

It belongs to the PrsA family.

Its subcellular location is the cell membrane. It catalyses the reaction [protein]-peptidylproline (omega=180) = [protein]-peptidylproline (omega=0). Functionally, plays a major role in protein secretion by helping the post-translocational extracellular folding of several secreted proteins. In Clostridium perfringens (strain SM101 / Type A), this protein is Foldase protein PrsA.